Consider the following 86-residue polypeptide: uncharacterized protein (86 aa).

4Fe-4S ferredoxin-type domains are found at residues 1–29 and 31–65; these read MALLITSKCTNCDMCLPECPNEAISIGDE and YVIDPILCTECVGHYDTPTCQKVCPITNCIKPDPE. [4Fe-4S] cluster is bound by residues Cys9, Cys12, Cys15, Cys19, Cys38, Cys41, Cys50, and Cys54.

Requires [4Fe-4S] cluster as cofactor.

This is an uncharacterized protein from Haemophilus influenzae (strain ATCC 51907 / DSM 11121 / KW20 / Rd).